The primary structure comprises 151 residues: 3-hydroxyacyl-[acyl-carrier-protein] dehydratase FabZ (151 aa).

Histidine 49 is an active-site residue.

The protein belongs to the thioester dehydratase family. FabZ subfamily.

It localises to the cytoplasm. The enzyme catalyses a (3R)-hydroxyacyl-[ACP] = a (2E)-enoyl-[ACP] + H2O. Functionally, involved in unsaturated fatty acids biosynthesis. Catalyzes the dehydration of short chain beta-hydroxyacyl-ACPs and long chain saturated and unsaturated beta-hydroxyacyl-ACPs. This chain is 3-hydroxyacyl-[acyl-carrier-protein] dehydratase FabZ, found in Bordetella parapertussis (strain 12822 / ATCC BAA-587 / NCTC 13253).